Reading from the N-terminus, the 114-residue chain is Large ribosomal subunit protein bL19 (114 aa).

Belongs to the bacterial ribosomal protein bL19 family.

Functionally, this protein is located at the 30S-50S ribosomal subunit interface and may play a role in the structure and function of the aminoacyl-tRNA binding site. The polypeptide is Large ribosomal subunit protein bL19 (Thermobifida fusca (strain YX)).